A 293-amino-acid chain; its full sequence is Non-homologous end joining protein Ku (293 aa).

A Ku domain is found at 10-195; sequence ISFGLVHIPV…KLDKRELEMA (186 aa). The tract at residues 216–229 is required for dimerization; that stretch reads SDKIMKLVEEKAAK. Positions 260–293 are disordered; the sequence is RSRAGGGKDKGSEKAGADAKGRAKSGASRSRRKA. Residues 265 to 280 show a composition bias toward basic and acidic residues; the sequence is GGKDKGSEKAGADAKG.

This sequence belongs to the prokaryotic Ku family. As to quaternary structure, homodimer, may form higher-order multimers on DNA. Non-dimerized protein does not stimulate LigD ligase activity. Probably interacts with LigD.

Its function is as follows. With LigD forms a non-homologous end joining (NHEJ) DNA repair enzyme, which repairs dsDNA breaks with reduced fidelity. Stimulates rNTP addition to DSB and end joining (ligation) of linear DNA by LigD, on 3'-overhangs and probably also 5'-overhangs and blunt dsDNA breaks. Binds both ends of linear dsDNA protecting it from exonuclease activity. In Pseudomonas aeruginosa (strain ATCC 15692 / DSM 22644 / CIP 104116 / JCM 14847 / LMG 12228 / 1C / PRS 101 / PAO1), this protein is Non-homologous end joining protein Ku.